The primary structure comprises 382 residues: Glutamyl-tRNA reductase (382 aa).

Substrate-binding positions include 38-41 (TCNR), Ser85, 90-92 (ENQ), and Gln96. Cys39 acts as the Nucleophile in catalysis. NADP(+) is bound at residue 164–169 (GAGEMG).

It belongs to the glutamyl-tRNA reductase family. As to quaternary structure, homodimer.

It carries out the reaction (S)-4-amino-5-oxopentanoate + tRNA(Glu) + NADP(+) = L-glutamyl-tRNA(Glu) + NADPH + H(+). It functions in the pathway porphyrin-containing compound metabolism; protoporphyrin-IX biosynthesis; 5-aminolevulinate from L-glutamyl-tRNA(Glu): step 1/2. Its function is as follows. Catalyzes the NADPH-dependent reduction of glutamyl-tRNA(Glu) to glutamate 1-semialdehyde (GSA). In Methanococcus maripaludis (strain C5 / ATCC BAA-1333), this protein is Glutamyl-tRNA reductase.